A 237-amino-acid polypeptide reads, in one-letter code: Uridylate kinase (237 aa).

10–13 contributes to the ATP binding site; sequence KLSG. G52 contributes to the UMP binding site. Positions 53 and 57 each coordinate ATP. UMP is bound by residues D72 and 133 to 140; that span reads TGNPFFTT. Residues T160, Y166, and D169 each coordinate ATP.

Belongs to the UMP kinase family. Homohexamer.

It localises to the cytoplasm. It catalyses the reaction UMP + ATP = UDP + ADP. Its pathway is pyrimidine metabolism; CTP biosynthesis via de novo pathway; UDP from UMP (UMPK route): step 1/1. With respect to regulation, inhibited by UTP. In terms of biological role, catalyzes the reversible phosphorylation of UMP to UDP. This is Uridylate kinase from Thiobacillus denitrificans (strain ATCC 25259 / T1).